The sequence spans 570 residues: GDP-Man:Man(3)GlcNAc(2)-PP-Dol alpha-1,2-mannosyltransferase (570 aa).

Topologically, residues 1 to 7 (MKLADFV) are lumenal. A helical transmembrane segment spans residues 8–70 (TYVFGSLLAG…DFGWKNSSVR (63 aa)). The Cytoplasmic portion of the chain corresponds to 71-200 (RAFILASERP…RLVESKSWPK (130 aa)). An intramembrane region (helical) is located at residues 201–221 (FTLLGQAYGSIILSIEALTTL). Residues 222 to 446 (APDYWIDTMG…FGINAMWNEH (225 aa)) are Cytoplasmic-facing. The helical intramembrane region spans 447-467 (FGIAVVEYMASGLIPLCHASA). Over 468–570 (GPLYDIVVPW…LNLTHNRMFS (103 aa)) the chain is Cytoplasmic.

It belongs to the glycosyltransferase group 1 family.

The protein localises to the endoplasmic reticulum membrane. It catalyses the reaction an alpha-D-Man-(1-&gt;3)-[alpha-D-Man-(1-&gt;6)]-beta-D-Man-(1-&gt;4)-beta-D-GlcNAc-(1-&gt;4)-alpha-D-GlcNAc-diphospho-di-trans,poly-cis-dolichol + 2 GDP-alpha-D-mannose = an alpha-D-Man-(1-&gt;2)-alpha-D-Man-(1-&gt;2)-alpha-D-Man-(1-&gt;3)-[alpha-D-Man-(1-&gt;6)]-beta-D-Man-(1-&gt;4)-beta-D-GlcNAc-(1-&gt;4)-alpha-D-GlcNAc-diphospho-di-trans,poly-cis-dolichol + 2 GDP + 2 H(+). It participates in protein modification; protein glycosylation. In terms of biological role, GDP-Man:Man(3)GlcNAc(2)-PP-Dol alpha-1,2-mannosyltransferase that operates in the biosynthetic pathway of dolichol-linked oligosaccharides, the glycan precursors employed in protein asparagine (N)-glycosylation. The assembly of dolichol-linked oligosaccharides begins on the cytosolic side of the endoplasmic reticulum membrane and finishes in its lumen. The sequential addition of sugars to dolichol pyrophosphate produces dolichol-linked oligosaccharides containing fourteen sugars, including two GlcNAcs, nine mannoses and three glucoses. Once assembled, the oligosaccharide is transferred from the lipid to nascent proteins by oligosaccharyltransferases. Catalyzes, on the cytoplasmic face of the endoplasmic reticulum, the addition of the fourth and fifth mannose residues to the dolichol-linked oligosaccharide chain, to produce Man(5)GlcNAc(2)-PP-dolichol core oligosaccharide. In Kluyveromyces lactis (strain ATCC 8585 / CBS 2359 / DSM 70799 / NBRC 1267 / NRRL Y-1140 / WM37) (Yeast), this protein is GDP-Man:Man(3)GlcNAc(2)-PP-Dol alpha-1,2-mannosyltransferase (ALG11).